The following is a 107-amino-acid chain: Cell division protein FtsB (107 aa).

Topologically, residues Met1–Lys3 are cytoplasmic. The chain crosses the membrane as a helical span at residues Leu4–Leu21. The Periplasmic portion of the chain corresponds to Gly22–Gln107. Positions Gln39–Gly62 form a coiled coil.

This sequence belongs to the FtsB family. As to quaternary structure, part of a complex composed of FtsB, FtsL and FtsQ.

It is found in the cell inner membrane. Essential cell division protein. May link together the upstream cell division proteins, which are predominantly cytoplasmic, with the downstream cell division proteins, which are predominantly periplasmic. This chain is Cell division protein FtsB, found in Yersinia enterocolitica serotype O:8 / biotype 1B (strain NCTC 13174 / 8081).